Here is a 141-residue protein sequence, read N- to C-terminus: Large ribosomal subunit protein uL11 (141 aa).

It belongs to the universal ribosomal protein uL11 family. Part of the ribosomal stalk of the 50S ribosomal subunit. Interacts with L10 and the large rRNA to form the base of the stalk. L10 forms an elongated spine to which L12 dimers bind in a sequential fashion forming a multimeric L10(L12)X complex. One or more lysine residues are methylated.

Forms part of the ribosomal stalk which helps the ribosome interact with GTP-bound translation factors. The chain is Large ribosomal subunit protein uL11 from Streptococcus suis (strain 05ZYH33).